The following is a 91-amino-acid chain: Putative methyltransferase YfdM (91 aa).

This is Putative methyltransferase YfdM (yfdM) from Escherichia coli (strain K12).